The primary structure comprises 364 residues: Peptide chain release factor 2 (364 aa).

Position 251 is an N5-methylglutamine (Gln251).

This sequence belongs to the prokaryotic/mitochondrial release factor family. In terms of processing, methylated by PrmC. Methylation increases the termination efficiency of RF2.

The protein localises to the cytoplasm. In terms of biological role, peptide chain release factor 2 directs the termination of translation in response to the peptide chain termination codons UGA and UAA. This Campylobacter hominis (strain ATCC BAA-381 / DSM 21671 / CCUG 45161 / LMG 19568 / NCTC 13146 / CH001A) protein is Peptide chain release factor 2.